The following is a 214-amino-acid chain: GTP-binding nuclear protein Ran (214 aa).

In terms of domain architecture, Small GTPase Ran-type spans 6-170 (YIPQYKLILV…LWLARRLSNQ (165 aa)). 17–24 (DGGVGKTT) contributes to the GTP binding site. The segment at 36–44 (KKYIPTLGV) is switch-I. Residues glycine 67, 121–124 (NKVD), and 149–151 (SAR) each bind GTP. The segment at 67–83 (GQEKFGGLRDGYYIKSD) is switch-II.

This sequence belongs to the small GTPase superfamily. Ran family. As to quaternary structure, found in a nuclear export complex with RanGTP, exportin and pre-miRNA.

Its subcellular location is the nucleus. Its function is as follows. GTP-binding protein involved in nucleocytoplasmic transport. Required for the import of protein into the nucleus and also for RNA export. Involved in chromatin condensation and control of cell cycle. This is GTP-binding nuclear protein Ran from Plasmodium falciparum.